Reading from the N-terminus, the 124-residue chain is Histone H2A (124 aa).

A compositionally biased stretch (basic residues) spans 1-18 (MSGRGKSGKARTKAKSRS). Positions 1 to 21 (MSGRGKSGKARTKAKSRSSRA) are disordered. At S2 the chain carries N-acetylserine. Position 2 is a phosphoserine (S2). N5-methylglutamine is present on Q104. Residue K119 forms a Glycyl lysine isopeptide (Lys-Gly) (interchain with G-Cter in ubiquitin) linkage.

This sequence belongs to the histone H2A family. As to quaternary structure, the nucleosome is a histone octamer containing two molecules each of H2A, H2B, H3 and H4 assembled in one H3-H4 heterotetramer and two H2A-H2B heterodimers. The octamer wraps approximately 147 bp of DNA. Post-translationally, monoubiquitination of Lys-119 gives a specific tag for epigenetic transcriptional repression. Phosphorylation of Ser-2 directly represses transcription.

It localises to the nucleus. The protein resides in the chromosome. Functionally, core component of nucleosome. Nucleosomes wrap and compact DNA into chromatin, limiting DNA accessibility to the cellular machineries which require DNA as a template. Histones thereby play a central role in transcription regulation, DNA repair, DNA replication and chromosomal stability. DNA accessibility is regulated via a complex set of post-translational modifications of histones, also called histone code, and nucleosome remodeling. This Paracentrotus lividus (Common sea urchin) protein is Histone H2A.